Here is a 200-residue protein sequence, read N- to C-terminus: Translation machinery-associated protein 22 (200 aa).

The SUI1 domain occupies 106 to 177; it reads VQIKRVERNK…DVLEWLVEVH (72 aa).

It belongs to the DENR family. In terms of assembly, interacts with the 40S ribosomal subunit.

It localises to the cytoplasm. The polypeptide is Translation machinery-associated protein 22 (TMA22) (Coccidioides immitis (strain RS) (Valley fever fungus)).